A 793-amino-acid chain; its full sequence is E3 UFM1-protein ligase 1 (793 aa).

Residues 2–212 (AADWEEIRRL…INNLLNLYGF (211 aa)) form a required for E3 UFM1-protein ligase activity region. Disordered stretches follow at residues 405 to 472 (ALLE…RNKL) and 745 to 793 (GAEK…SVTE). Over residues 427-439 (EGGGSVKSGGGGN) the composition is skewed to gly residues. Residues 767-781 (SLQRELHSLSRDIKD) show a composition bias toward basic and acidic residues.

This sequence belongs to the UFL1 family. As to quaternary structure, catalytic component of the UFM1 ribosome E3 ligase (UREL) complex. Interacts with E2-like enzyme UFC1.

The protein resides in the endoplasmic reticulum membrane. It localises to the cytoplasm. The protein localises to the cytosol. Its subcellular location is the nucleus. It is found in the chromosome. E3 protein ligase that mediates ufmylation, the covalent attachment of the ubiquitin-like modifier UFM1 to lysine residues on target proteins, and which plays a key role in various processes, such as ribosome recycling, response to DNA damage, interferon response or reticulophagy (also called ER-phagy). As part of the UREL complex, plays a key role in ribosome recycling by catalyzing mono-ufmylation of RPL26/uL24 subunit of the 60S ribosome. Ufmylation of RPL26/uL24 occurs on free 60S ribosomes following ribosome dissociation: it weakens the junction between post-termination 60S subunits and SEC61 translocons, promoting release and recycling of the large ribosomal subunit from the endoplasmic reticulum membrane. Ufmylation of RPL26/uL24 and subsequent 60S ribosome recycling either take place after normal termination of translation or after ribosome stalling during cotranslational translocation at the endoplasmic reticulum. Involved in reticulophagy in response to endoplasmic reticulum stress by mediating ufmylation of proteins such as CYB5R3 and RPN1, thereby promoting lysosomal degradation of ufmylated proteins. Ufmylation in response to endoplasmic reticulum stress is essential for processes such as hematopoiesis, blood vessel morphogenesis or inflammatory response. The chain is E3 UFM1-protein ligase 1 from Danio rerio (Zebrafish).